The primary structure comprises 601 residues: DNA topoisomerase I, mitochondrial (601 aa).

The N-terminal 50 residues, 1–50 (MRVVRLLRLRAALTLLGEVPRRPASRGVPGSRRTQKGSGARWEKEKHEDG), are a transit peptide targeting the mitochondrion. The interval 22–48 (RPASRGVPGSRRTQKGSGARWEKEKHE) is disordered. 3 interaction with DNA regions span residues 261-262 (KY), 324-329 (RAGNEK), and 421-423 (TAK). A Topo IB-type catalytic domain is found at 268–601 (CSKLKGETAW…LAMAGEDFEF (334 aa)). Tyr559 acts as the O-(3'-phospho-DNA)-tyrosine intermediate in catalysis.

The protein belongs to the type IB topoisomerase family. The cofactor is Ca(2+). It depends on Mg(2+) as a cofactor.

The protein localises to the mitochondrion. The catalysed reaction is ATP-independent breakage of single-stranded DNA, followed by passage and rejoining.. Its function is as follows. Releases the supercoiling and torsional tension of DNA introduced during duplication of mitochondrial DNA by transiently cleaving and rejoining one strand of the DNA duplex. Introduces a single-strand break via transesterification at a target site in duplex DNA. The scissile phosphodiester is attacked by the catalytic tyrosine of the enzyme, resulting in the formation of a DNA-(3'-phosphotyrosyl)-enzyme intermediate and the expulsion of a 5'-OH DNA strand. The free DNA strand then rotates around the intact phosphodiester bond on the opposing strand, thus removing DNA supercoils. Finally, in the religation step, the DNA 5'-OH attacks the covalent intermediate to expel the active-site tyrosine and restore the DNA phosphodiester backbone. In Pan troglodytes (Chimpanzee), this protein is DNA topoisomerase I, mitochondrial (TOP1MT).